Here is a 360-residue protein sequence, read N- to C-terminus: Probable dual-specificity RNA methyltransferase RlmN (360 aa).

The active-site Proton acceptor is the Glu-91. Positions 97–335 (QHYGQSVCVT…CVVRQEHGTD (239 aa)) constitute a Radical SAM core domain. A disulfide bridge connects residues Cys-104 and Cys-340. Residues Cys-111, Cys-115, and Cys-118 each contribute to the [4Fe-4S] cluster site. S-adenosyl-L-methionine contacts are provided by residues 163 to 164 (GE), Ser-195, 218 to 220 (SLH), and Asn-296. The S-methylcysteine intermediate role is filled by Cys-340.

This sequence belongs to the radical SAM superfamily. RlmN family. [4Fe-4S] cluster is required as a cofactor.

The protein resides in the cytoplasm. The enzyme catalyses adenosine(2503) in 23S rRNA + 2 reduced [2Fe-2S]-[ferredoxin] + 2 S-adenosyl-L-methionine = 2-methyladenosine(2503) in 23S rRNA + 5'-deoxyadenosine + L-methionine + 2 oxidized [2Fe-2S]-[ferredoxin] + S-adenosyl-L-homocysteine. It catalyses the reaction adenosine(37) in tRNA + 2 reduced [2Fe-2S]-[ferredoxin] + 2 S-adenosyl-L-methionine = 2-methyladenosine(37) in tRNA + 5'-deoxyadenosine + L-methionine + 2 oxidized [2Fe-2S]-[ferredoxin] + S-adenosyl-L-homocysteine. Its function is as follows. Specifically methylates position 2 of adenine 2503 in 23S rRNA and position 2 of adenine 37 in tRNAs. The sequence is that of Probable dual-specificity RNA methyltransferase RlmN from Streptococcus equi subsp. zooepidemicus (strain MGCS10565).